Reading from the N-terminus, the 336-residue chain is Mitochondrial import receptor subunit TOM40 homolog (336 aa).

The interval Met-1–Phe-58 is disordered. Over residues Pro-10 to Pro-21 the composition is skewed to pro residues. Residues Pro-42–Leu-52 show a composition bias toward basic and acidic residues.

It belongs to the Tom40 family. As to quaternary structure, forms part of the preprotein translocase complex of the outer mitochondrial membrane (TOM complex). Interacts with mitochondrial targeting sequences.

The protein resides in the mitochondrion outer membrane. Channel-forming protein essential for import of protein precursors into mitochondria. In Xenopus laevis (African clawed frog), this protein is Mitochondrial import receptor subunit TOM40 homolog (tomm40).